Reading from the N-terminus, the 349-residue chain is Aspartate carbamoyltransferase catalytic subunit (349 aa).

Residues arginine 59 and threonine 60 each contribute to the carbamoyl phosphate site. Lysine 87 is an L-aspartate binding site. Residues arginine 109, histidine 142, and glutamine 145 each contribute to the carbamoyl phosphate site. Residues arginine 182 and arginine 253 each coordinate L-aspartate. Carbamoyl phosphate contacts are provided by glycine 294 and proline 295.

It belongs to the aspartate/ornithine carbamoyltransferase superfamily. ATCase family. Heterododecamer (2C3:3R2) of six catalytic PyrB chains organized as two trimers (C3), and six regulatory PyrI chains organized as three dimers (R2).

It catalyses the reaction carbamoyl phosphate + L-aspartate = N-carbamoyl-L-aspartate + phosphate + H(+). The protein operates within pyrimidine metabolism; UMP biosynthesis via de novo pathway; (S)-dihydroorotate from bicarbonate: step 2/3. Catalyzes the condensation of carbamoyl phosphate and aspartate to form carbamoyl aspartate and inorganic phosphate, the committed step in the de novo pyrimidine nucleotide biosynthesis pathway. The chain is Aspartate carbamoyltransferase catalytic subunit from Synechococcus sp. (strain CC9605).